Consider the following 269-residue polypeptide: GTP cyclohydrolase FolE2 1 (269 aa).

It belongs to the GTP cyclohydrolase IV family.

The catalysed reaction is GTP + H2O = 7,8-dihydroneopterin 3'-triphosphate + formate + H(+). Its pathway is cofactor biosynthesis; 7,8-dihydroneopterin triphosphate biosynthesis; 7,8-dihydroneopterin triphosphate from GTP: step 1/1. In terms of biological role, converts GTP to 7,8-dihydroneopterin triphosphate. This is GTP cyclohydrolase FolE2 1 from Burkholderia cenocepacia (strain HI2424).